We begin with the raw amino-acid sequence, 739 residues long: MSPHQTTGQESDNMAVNGENAQASSQYIQLNSEETTDTVAAEKKAAAAKAKDPSRPKRKKAKRACYACQRGHLTCGDERPCQRCIKRGFQDACHDGVRKKAKYLHDAPNEALMAGVGASLYNQRNTTQNSINGANAPSSASQQITSPNFYNAQQSPDYNGYSQTKAELQDSTIGPENFASQSPVSPTYQMGQPMPNQGLSPSLPQSASETPSTANGAPSQFNSAFFDPSDPALFNFDLASMNFGNHYGALEFGMLGHMATGVGDTPPSDNGAQRGSIGQNSSGTFGLAGSNFAESPSNQGPYLFGDSGMNDWTQSAPVNRRNMYGSNANMVAGNMSDKPHAFAIESAPANFASPASNESPMMTTSSATFEDAANATAFNSRQNTSLPQQQQQQRQQPVVSTPQLKQQNLNIGSRRRHKNASSIYDSVKDPYSYTSGFHSLTAFIQRRFSPQKTLRIAKALASIRPSFIATTKTLNRDDLIFMEKCFQRTLWEYEDFINACGTPTIVCRRTGEIAAVGKEFSILTGWRKEVLLGKEPNHNVNTGGSSGLLTGSTSRGSYTPRPYSSDQFNSSTTATPRTQPVFLAELLDDDSVIEFYEDFAKLAFGDSRGSVMTTCKLLKYKTKADSGVIASGNGEVGAAQNNEVGSGEANELNSSSNGTTSTGRGQRRWGKGEIAGEAGMNQLGFRDGKVECSYCWTVKRDVFDIPMLIVMNGEMECMEVNIITSGQPNYQAFRALVKD.

Positions 1–33 (MSPHQTTGQESDNMAVNGENAQASSQYIQLNSE) are enriched in polar residues. The segment at 1–62 (MSPHQTTGQE…PSRPKRKKAK (62 aa)) is disordered. The span at 40 to 55 (AAEKKAAAAKAKDPSR) shows a compositional bias: basic and acidic residues. A DNA-binding region (zn(2)-C6 fungal-type) is located at residues 65-93 (CYACQRGHLTCGDERPCQRCIKRGFQDAC). Disordered regions lie at residues 174-223 (GPEN…QFNS), 264-308 (DTPP…GDSG), 380-420 (SRQN…HKNA), 537-574 (NHNVNTGGSSGLLTGSTSRGSYTPRPYSSDQFNSSTTA), and 639-668 (AQNNEVGSGEANELNSSSNGTTSTGRGQRR). Polar residues-rich tracts occupy residues 267–284 (PSDNGAQRGSIGQNSSGT) and 397–411 (PVVSTPQLKQQNLNI). Residues 547-557 (GLLTGSTSRGS) are compositionally biased toward low complexity. Residues 562–574 (PYSSDQFNSSTTA) show a composition bias toward polar residues. Residues 653–664 (NSSSNGTTSTGR) show a composition bias toward low complexity.

The protein belongs to the ERT1/acuK family.

It localises to the nucleus. Transcription factor which regulates nonfermentable carbon utilization. Activator of gluconeogenetic genes. This Arthroderma otae (strain ATCC MYA-4605 / CBS 113480) (Microsporum canis) protein is Transcription activator of gluconeogenesis MCYG_04674.